Consider the following 661-residue polypeptide: MSRELIILCQPILVLFLTLFYNSHGYFVSQGSVGIGFNGYFTLTNTTKHTFGQAFENEHVEIKNSSTGVISSFSVNFFFAIVPEHNQQGSHGMTFVISPTRGLPGASSDQYLGIFNKTNNGKASNNVIAIELDIHKDEEFGDIDDNHVGININGLRSVASASAGYYDDKDGSFKKLSLISREVMRLSIVYSQPDQQLNVTLFPAEIPVPPLKPLLSLNRDLSPYLLEKMYLGFTASTGSVGAIHYLMGWLVNGVIEYPRLELSIPVLPPYPKKTSNRTKTVLAVCLTVSVFAAFVASWIGFVFYLRHKKVKEVLEEWEIQYGPHRFAYKELFNATKGFKEKQLLGKGGFGQVYKGTLPGSDAEIAVKRTSHDSRQGMSEFLAEISTIGRLRHPNLVRLLGYCRHKENLYLVYDYMPNGSLDKYLNRSENQERLTWEQRFRIIKDVATALLHLHQEWVQVIIHRDIKPANVLIDNEMNARLGDFGLAKLYDQGFDPETSKVAGTFGYIAPEFLRTGRATTSTDVYAFGLVMLEVVCGRRIIERRAAENEEYLVDWILELWENGKIFDAAEESIRQEQNRGQVELVLKLGVLCSHQAASIRPAMSVVMRILNGVSQLPDNLLDVVRAEKFREWPETSMELLLLDVNTSSSLELTDSSFVSHGR.

A signal peptide spans 1–25; sequence MSRELIILCQPILVLFLTLFYNSHG. The Extracellular segment spans residues 26–282; sequence YFVSQGSVGI…KTSNRTKTVL (257 aa). The legume-lectin like stretch occupies residues 30–250; the sequence is QGSVGIGFNG…GAIHYLMGWL (221 aa). Asparagine 45, asparagine 64, asparagine 116, asparagine 198, and asparagine 276 each carry an N-linked (GlcNAc...) asparagine glycan. A helical transmembrane segment spans residues 283 to 303; the sequence is AVCLTVSVFAAFVASWIGFVF. Over 304–661 the chain is Cytoplasmic; that stretch reads YLRHKKVKEV…TDSSFVSHGR (358 aa). The Protein kinase domain occupies 338–596; the sequence is FKEKQLLGKG…LGVLCSHQAA (259 aa). ATP-binding positions include 344–352 and lysine 367; that span reads LGKGGFGQV. Aspartate 464 serves as the catalytic Proton acceptor.

This sequence in the C-terminal section; belongs to the protein kinase superfamily. Ser/Thr protein kinase family. The protein in the N-terminal section; belongs to the leguminous lectin family. In terms of processing, autophosphorylated on a Ser residue. As to expression, expressed at low levels in stems, leaves, flowers and siliques.

The protein resides in the cell membrane. It carries out the reaction L-seryl-[protein] + ATP = O-phospho-L-seryl-[protein] + ADP + H(+). The catalysed reaction is L-threonyl-[protein] + ATP = O-phospho-L-threonyl-[protein] + ADP + H(+). Confers resistance to the pathogenic oomycetes Phytophthora infestans and Phytophthora capsici, but confers susceptibility to the pathogenic bacteria Pseudomonas syringae. The sequence is that of L-type lectin-domain containing receptor kinase V.5 from Arabidopsis thaliana (Mouse-ear cress).